A 459-amino-acid chain; its full sequence is Ribulose bisphosphate carboxylase (459 aa).

Residue N111 coordinates substrate. The Proton acceptor role is filled by K166. K168 contacts substrate. Residues K191, D193, and E194 each contribute to the Mg(2+) site. K191 is subject to N6-carboxylysine. H287 functions as the Proton acceptor in the catalytic mechanism. Substrate is bound by residues R288, H321, and S368.

Belongs to the RuBisCO large chain family. Type II subfamily. Homodimer. Mg(2+) is required as a cofactor.

It carries out the reaction 2 (2R)-3-phosphoglycerate + 2 H(+) = D-ribulose 1,5-bisphosphate + CO2 + H2O. The catalysed reaction is D-ribulose 1,5-bisphosphate + O2 = 2-phosphoglycolate + (2R)-3-phosphoglycerate + 2 H(+). Its function is as follows. RuBisCO catalyzes two reactions: the carboxylation of D-ribulose 1,5-bisphosphate, the primary event in carbon dioxide fixation, as well as the oxidative fragmentation of the pentose substrate. Both reactions occur simultaneously and in competition at the same active site. This Albidiferax ferrireducens (strain ATCC BAA-621 / DSM 15236 / T118) (Rhodoferax ferrireducens) protein is Ribulose bisphosphate carboxylase.